A 776-amino-acid polypeptide reads, in one-letter code: Calcium-independent phospholipase A2-gamma (776 aa).

Residues asparagine 4 and asparagine 157 are each glycosylated (N-linked (GlcNAc...) asparagine). Disordered stretches follow at residues 216-276 and 306-334; these read KGKM…HPVS and KLKSDPKSPPEEQEVSAKTEQAVNKDKKA. Basic and acidic residues-rich tracts occupy residues 221-239 and 247-263; these read QTKEDKQLQDKPDLEERKS and VADRPDSESPLEVKDKL. One can recognise a PNPLA domain in the interval 439 to 634; that stretch reads LTIDGGGTRG…LLNNPSALAL (196 aa). Residues 443-448 carry the GXGXXG motif; the sequence is GGGTRG. The helical transmembrane segment at 469-489 threads the bilayer; sequence LFDYICGVSTGAILAFMLGLF. The short motif at 475–479 is the GXSXG element; that stretch reads GVSTG. Residue serine 477 is the Nucleophile of the active site. The active-site Proton acceptor is aspartate 621. A DGA/G motif is present at residues 621–623; it reads DGG. At lysine 730 the chain carries N6-succinyllysine.

Expressed in myocardium (at protein level).

It is found in the endoplasmic reticulum membrane. It localises to the mitochondrion membrane. Its subcellular location is the peroxisome membrane. The enzyme catalyses a 1,2-diacyl-sn-glycero-3-phosphocholine + H2O = a 1-acyl-sn-glycero-3-phosphocholine + a fatty acid + H(+). It carries out the reaction a 1,2-diacyl-sn-glycero-3-phosphocholine + H2O = a 2-acyl-sn-glycero-3-phosphocholine + a fatty acid + H(+). It catalyses the reaction a 1,2-diacyl-sn-glycero-3-phosphoethanolamine + H2O = a 1-acyl-sn-glycero-3-phosphoethanolamine + a fatty acid + H(+). The catalysed reaction is a 1-O-(1Z-alkenyl)-2-acyl-sn-glycero-3-phosphocholine + H2O = a 1-O-(1Z-alkenyl)-sn-glycero-3-phosphocholine + a fatty acid + H(+). The enzyme catalyses a 1-acyl-sn-glycero-3-phosphocholine + H2O = sn-glycerol 3-phosphocholine + a fatty acid + H(+). It carries out the reaction 1-hexadecanoyl-2-(5Z,8Z,11Z,14Z-eicosatetraenoyl)-sn-glycero-3-phosphocholine + H2O = 2-(5Z,8Z,11Z,14Z)-eicosatetraenoyl-sn-glycero-3-phosphocholine + hexadecanoate + H(+). It catalyses the reaction 1-acyl-2-(9Z,12Z)-octadecadienoyl-sn-glycero-3-phosphocholine + H2O = a 1-acyl-sn-glycero-3-phosphocholine + (9Z,12Z)-octadecadienoate + H(+). The catalysed reaction is 1-acyl-2-(5Z,8Z,11Z,14Z-eicosatetraenoyl)-sn-glycero-3-phosphocholine + H2O = a 1-acyl-sn-glycero-3-phosphocholine + (5Z,8Z,11Z,14Z)-eicosatetraenoate + H(+). The enzyme catalyses 1-hexadecanoyl-2-(5Z,8Z,11Z,14Z-eicosatetraenoyl)-sn-glycero-3-phosphocholine + H2O = 1-hexadecanoyl-sn-glycero-3-phosphocholine + (5Z,8Z,11Z,14Z)-eicosatetraenoate + H(+). It carries out the reaction 1-octadecanoyl-2-(9Z-octadecenoyl)-sn-glycero-3-phosphocholine + H2O = 1-octadecanoyl-sn-glycero-3-phosphocholine + (9Z)-octadecenoate + H(+). It catalyses the reaction 1-hexadecanoyl-2-(9Z-octadecenoyl)-sn-glycero-3-phosphocholine + H2O = 1-hexadecanoyl-sn-glycero-3-phosphocholine + (9Z)-octadecenoate + H(+). The catalysed reaction is 1-hexadecanoyl-2-(9Z,12Z-octadecadienoyl)-sn-glycero-3-phosphocholine + H2O = (9Z,12Z)-octadecadienoate + 1-hexadecanoyl-sn-glycero-3-phosphocholine + H(+). The enzyme catalyses 1-acyl-2-(9Z,12Z)-octadecadienoyl-sn-glycero-3-phosphoethanolamine + H2O = a 1-acyl-sn-glycero-3-phosphoethanolamine + (9Z,12Z)-octadecadienoate + H(+). It carries out the reaction 1-acyl-2-(5Z,8Z,11Z,14Z)-eicosatetraenoyl-sn-glycero-3-phosphoethanolamine + H2O = a 1-acyl-sn-glycero-3-phosphoethanolamine + (5Z,8Z,11Z,14Z)-eicosatetraenoate + H(+). It catalyses the reaction 1-hexadecanoyl-2-(5Z,8Z,11Z,14Z-eicosatetraenoyl)-sn-glycero-3-phosphoethanolamine + H2O = 1-hexadecanoyl-sn-glycero-3-phosphoethanolamine + (5Z,8Z,11Z,14Z)-eicosatetraenoate + H(+). The catalysed reaction is 1-octadecanoyl-2-(9Z-octadecenoyl)-sn-glycero-3-phosphocholine + H2O = 2-(9Z-octadecenoyl)-sn-glycero-3-phosphocholine + octadecanoate + H(+). The enzyme catalyses 1-hexadecanoyl-2-(4Z,7Z,10Z,13Z,16Z,19Z-docosahexaenoyl)-sn-glycero-3-phosphocholine + H2O = 2-(4Z,7Z,10Z,13Z,16Z,19Z-docosahexaenoyl)-sn-glycero-3-phosphocholine + hexadecanoate + H(+). It carries out the reaction 1-O-(1Z)-hexadecenyl-2 (5Z,8Z,11Z,14Z)-eicosatetraenoyl-sn-glycero-3-phosphocholine + H2O = 1-(1Z-hexadecenyl)-sn-glycero-3-phosphocholine + (5Z,8Z,11Z,14Z)-eicosatetraenoate + H(+). It catalyses the reaction 1-O-(1Z-hexadecenyl)-2-(9Z-octadecenoyl)-sn-glycero-3-phosphocholine + H2O = 1-(1Z-hexadecenyl)-sn-glycero-3-phosphocholine + (9Z)-octadecenoate + H(+). The catalysed reaction is 1-hexadecanoyl-sn-glycero-3-phosphocholine + H2O = sn-glycerol 3-phosphocholine + hexadecanoate + H(+). The enzyme catalyses 1',3'-bis-[1,2-di-(9Z,12Z-octadecadienoyl)-sn-glycero-3-phospho]-glycerol + H2O = 1'-[1,2-di-(9Z,12Z-octadecadienoyl)-sn-glycero-3-phospho]-3'-[1-(9Z,12Z-octadecadienoyl)-sn-glycero-3-phospho]-glycerol + (9Z,12Z)-octadecadienoate + H(+). It carries out the reaction 1'-[1-acyl-2-(9-hydroxy-(10E,12Z)-octadecadienoyl)-sn-glycero-3-phospho]-3'-[1,2-diacyl-sn-glycero-3-phospho]-glycerol + H2O = 9-hydroxy-(10E,12Z)-octadecadienoate + 1'-[1,2-diacyl-sn-glycero-3-phospho],3'-[1-acyl-sn-glycero-3-phospho]-glycerol + H(+). It participates in phospholipid metabolism. Its activity is regulated as follows. Calcium-independent phospholipase. Its function is as follows. Calcium-independent and membrane-bound phospholipase, that catalyzes the esterolytic cleavage of fatty acids from glycerophospholipids to yield free fatty acids and lysophospholipids, hence regulating membrane physical properties and the release of lipid second messengers and growth factors. Hydrolyzes phosphatidylethanolamine, phosphatidylcholine and probably phosphatidylinositol with a possible preference for the former. Also has a broad substrate specificity in terms of fatty acid moieties, hydrolyzing saturated and mono-unsaturated fatty acids at nearly equal rates from either the sn-1 or sn-2 position in diacyl phosphatidylcholine. However, has a weak activity toward polyunsaturated fatty acids at the sn-2 position, and thereby favors the production of 2-arachidonoyl lysophosphatidylcholine, a key branch point metabolite in eicosanoid signaling. On the other hand, can produce arachidonic acid from the sn-1 position of diacyl phospholipid and from the sn-2 position of arachidonate-containing plasmalogen substrates. Therefore, plays an important role in the mobilization of arachidonic acid in response to cellular stimuli and the generation of lipid second messengers. Can also hydrolyze lysophosphatidylcholine. In the mitochondrial compartment, catalyzes the hydrolysis and release of oxidized aliphatic chains from cardiolipin and integrates mitochondrial bioenergetics and signaling. It is essential for maintaining efficient bioenergetic mitochondrial function through tailoring mitochondrial membrane lipid metabolism and composition. This is Calcium-independent phospholipase A2-gamma from Mus musculus (Mouse).